The following is a 220-amino-acid chain: MATLLHIDSSVFPAEASASRSVTAAFRRTWEEQHPEGTVIYRDLAAVPVPHITADAWSAGYADPSERSTRQSAAFAARLELIEELERADVILIGAPMYNYTVPSTLKAWLDSVLLLGRTAGEAPSAQGTPTVVVASRGGSYAPGTPREDFEFVQNYLEAVLRSTLGLDLEFIVPELTMAPRNPAMSELLPLFESSRERAHSEAVTKAKELTERLTADNGR.

FMN contacts are provided by residues serine 10, 17-19, and 136-139; these read SAS and SRGG. The tract at residues 200–220 is disordered; that stretch reads HSEAVTKAKELTERLTADNGR.

This sequence belongs to the azoreductase type 1 family. As to quaternary structure, homodimer. Requires FMN as cofactor.

The catalysed reaction is 2 a quinone + NADH + H(+) = 2 a 1,4-benzosemiquinone + NAD(+). It catalyses the reaction N,N-dimethyl-1,4-phenylenediamine + anthranilate + 2 NAD(+) = 2-(4-dimethylaminophenyl)diazenylbenzoate + 2 NADH + 2 H(+). Quinone reductase that provides resistance to thiol-specific stress caused by electrophilic quinones. In terms of biological role, also exhibits azoreductase activity. Catalyzes the reductive cleavage of the azo bond in aromatic azo compounds to the corresponding amines. The chain is FMN-dependent NADH:quinone oxidoreductase from Streptomyces coelicolor (strain ATCC BAA-471 / A3(2) / M145).